The following is a 1251-amino-acid chain: Insulin receptor substrate 1 (1251 aa).

Ser-3 carries the post-translational modification Phosphoserine. The tract at residues 3-137 (SPPESDGFSD…GAGGGGGSCS (135 aa)) is mediates interaction with PHIP. One can recognise a PH domain in the interval 12–115 (DVRKVGYLRK…WYQALLQLHN (104 aa)). Ser-99 bears the Phosphoserine; by CK2 mark. The 105-residue stretch at 160–264 (FKEVWQVILK…EAMRAMSDEF (105 aa)) folds into the IRS-type PTB domain. Positions 262-430 (DEFRPRSKSQ…SDGGFISSDE (169 aa)) are disordered. Low complexity predominate over residues 269–281 (KSQSSSNCSNPIS). Phosphoserine is present on Ser-270. Ser-307 is modified (phosphoserine; by RPS6KB1). Ser-312 is subject to Phosphoserine; by IKKB, MAPK8 and RPS6KB1. 4 positions are modified to phosphoserine: Ser-323, Ser-330, Ser-345, and Ser-348. Residues 354-363 (THAHRHRGSA) show a composition bias toward basic residues. 2 stretches are compositionally biased toward low complexity: residues 383 to 404 (SPSA…GSTS) and 412 to 424 (SSAS…SDGG). Ser-419 is modified (phosphoserine). Thr-446 and Thr-453 each carry phosphothreonine. Phosphotyrosine; by INSR is present on Tyr-465. Positions 465–468 (YICM) match the YXXM motif 1 motif. The tract at residues 494–513 (YTPGTGLGTSPALAGDEASS) is disordered. Ser-527 bears the Phosphoserine; by RPS6KB1 mark. The YXXM motif 2 signature appears at 551-554 (YTEM). The span at 594–610 (RRGGHHRPDSSTLHTDD) shows a compositional bias: basic and acidic residues. Positions 594 to 616 (RRGGHHRPDSSTLHTDDGYMPMS) are disordered. Tyr-612 carries the post-translational modification Phosphotyrosine; by INSR. Positions 612–615 (YMPM) match the YXXM motif 3 motif. Position 629 is a phosphoserine (Ser-629). At Tyr-632 the chain carries Phosphotyrosine; by INSR. The YXXM motif 4 signature appears at 632-635 (YMPM). The residue at position 636 (Ser-636) is a Phosphoserine; by RPS6KB1. Tyr-662 carries the phosphotyrosine modification. A YXXM motif 5 motif is present at residues 662–665 (YMMM). The tract at residues 668-692 (SGGCSPDIGGGPSSSSSSTVPSGSS) is disordered. Residues 730–733 (YMNM) carry the YXXM motif 6 motif. Disordered stretches follow at residues 734 to 753 (SPVG…GPED) and 769 to 946 (FKHT…EETG). A compositionally biased stretch (basic and acidic residues) spans 774–783 (RPGEPEEGAR). Residue Ser-792 is modified to Phosphoserine; by AMPK and SIK2. 2 stretches are compositionally biased toward low complexity: residues 799–813 (AATA…SSDS) and 875–891 (QQQQ…QQQQ). Ser-901 is modified (phosphoserine). Residue Tyr-905 is modified to Phosphotyrosine; by INSR. The GRB2-binding stretch occupies residues 905–907 (YVN). Residues 924-937 (SRSSPSVRCPSQLQ) are compositionally biased toward polar residues. Phosphotyrosine; by INSR occurs at positions 950 and 998. 3 consecutive short sequence motifs (YXXM motif) follow at residues 950–953 (YMKM), 998–1001 (YMTM), and 1021–1024 (YADM). Disordered regions lie at residues 1091 to 1124 (NQSA…RVGN) and 1130 to 1149 (AGAA…DVKR). Phosphoserine is present on residues Ser-1109 and Ser-1110. A compositionally biased stretch (polar residues) spans 1111–1123 (ETFSSTPSATRVG). A Phosphotyrosine; by INSR modification is found at Tyr-1188. Lys-1195 is covalently cross-linked (Glycyl lysine isopeptide (Lys-Gly) (interchain with G-Cter in ubiquitin)). Residues 1195-1251 (KDFKQRPQECTPQPQPPPPPPPHQPLGSSESSSTRRSSEDLSAYASISFQKQPEDLQ) form a disordered region. Pro residues predominate over residues 1207–1218 (QPQPPPPPPPHQ). Tyr-1238 is subject to Phosphotyrosine; by INSR.

As to quaternary structure, interacts with UBTF and PIK3CA. Interacts (via phosphorylated YXXM motifs) with PIK3R1. Interacts with ROCK1 and FER. Interacts (via PH domain) with PHIP. Interacts with GRB2. Interacts with SOCS7. Interacts (via IRS-type PTB domain) with IGF1R and INSR (via the tyrosine-phosphorylated NPXY motif). Interacts with ALK. Interacts with EIF2AK2/PKR. Interacts with GKAP1. Interacts with DGKZ in the absence of insulin; insulin stimulation decreases this interaction. Found in a ternary complex with DGKZ and PIP5K1A in the absence of insulin stimulation. Interacts with SQSTM1; the interaction is disrupted by the presence of tensin TNS2. Interacts with NCK1 (via SH2 domain). Interacts with NCK2 (via SH3 domain). Interacts with SH2B1; this interaction enhances leptin-induced activation of the PI3-kinase pathway. Interacts with DVL2; this interaction promotes the Wnt/beta-catenin signaling pathway. Interacts with JAK1. Post-translationally, serine phosphorylation of IRS1 is a mechanism for insulin resistance. Ser-312 phosphorylation inhibits insulin action through disruption of IRS1 interaction with the insulin receptor. Phosphorylation of Tyr-905 is required for GRB2-binding. Phosphorylated by ALK. Phosphorylated at Ser-270, Ser-307, Ser-636 and Ser-1109 by RPS6KB1; phosphorylation induces accelerated degradation of IRS1. Phosphorylated on tyrosine residues in response to insulin. In skeletal muscles, dephosphorylated on Tyr-612 by TNS2 under anabolic conditions; dephosphorylation results in the proteasomal degradation of IRS1. Ubiquitinated by the Cul7-RING(FBXW8) complex in a mTOR-dependent manner, leading to its degradation: the Cul7-RING(FBXW8) complex recognizes and binds IRS1 previously phosphorylated by S6 kinase (RPS6KB1 or RPS6KB2). Ubiquitinated by TRAF4 through 'Lys-29' linkage; this ubiquitination regulates the interaction of IRS1 with IGFR and IRS1 tyrosine phosphorylation upon IGF1 stimulation. In terms of processing, S-nitrosylation at by BLVRB inhibits its activity.

The protein resides in the cytoplasm. It is found in the nucleus. In terms of biological role, signaling adapter protein that participates in the signal transduction from two prominent receptor tyrosine kinases, insulin receptor/INSR and insulin-like growth factor I receptor/IGF1R. Plays therefore an important role in development, growth, glucose homeostasis as well as lipid metabolism. Upon phosphorylation by the insulin receptor, functions as a signaling scaffold that propagates insulin action through binding to SH2 domain-containing proteins including the p85 regulatory subunit of PI3K, NCK1, NCK2, GRB2 or SHP2. Recruitment of GRB2 leads to the activation of the guanine nucleotide exchange factor SOS1 which in turn triggers the Ras/Raf/MEK/MAPK signaling cascade. Activation of the PI3K/AKT pathway is responsible for most of insulin metabolic effects in the cell, and the Ras/Raf/MEK/MAPK is involved in the regulation of gene expression and in cooperation with the PI3K pathway regulates cell growth and differentiation. Acts a positive regulator of the Wnt/beta-catenin signaling pathway through suppression of DVL2 autophagy-mediated degradation leading to cell proliferation. The sequence is that of Insulin receptor substrate 1 (IRS1) from Chlorocebus aethiops (Green monkey).